We begin with the raw amino-acid sequence, 358 residues long: Methylthioribose-1-phosphate isomerase (358 aa).

Residues 54 to 56 (RGA), Arg-96, and Gln-205 contribute to the substrate site. Asp-246 serves as the catalytic Proton donor. 256-257 (SK) is a substrate binding site.

This sequence belongs to the eIF-2B alpha/beta/delta subunits family. MtnA subfamily.

The enzyme catalyses 5-(methylsulfanyl)-alpha-D-ribose 1-phosphate = 5-(methylsulfanyl)-D-ribulose 1-phosphate. The protein operates within amino-acid biosynthesis; L-methionine biosynthesis via salvage pathway; L-methionine from S-methyl-5-thio-alpha-D-ribose 1-phosphate: step 1/6. In terms of biological role, catalyzes the interconversion of methylthioribose-1-phosphate (MTR-1-P) into methylthioribulose-1-phosphate (MTRu-1-P). The sequence is that of Methylthioribose-1-phosphate isomerase from Pseudomonas putida (strain GB-1).